Reading from the N-terminus, the 295-residue chain is UDP-N-acetylenolpyruvoylglucosamine reductase (295 aa).

One can recognise an FAD-binding PCMH-type domain in the interval 24 to 188 (KVGGNAEIFF…LKAVFKINKG (165 aa)). Residue Arg-168 is part of the active site. Ser-217 serves as the catalytic Proton donor. Residue Glu-287 is part of the active site.

The protein belongs to the MurB family. It depends on FAD as a cofactor.

It localises to the cytoplasm. The catalysed reaction is UDP-N-acetyl-alpha-D-muramate + NADP(+) = UDP-N-acetyl-3-O-(1-carboxyvinyl)-alpha-D-glucosamine + NADPH + H(+). It participates in cell wall biogenesis; peptidoglycan biosynthesis. Its function is as follows. Cell wall formation. This Rickettsia massiliae (strain Mtu5) protein is UDP-N-acetylenolpyruvoylglucosamine reductase.